The chain runs to 455 residues: Gastric inhibitory polypeptide receptor (455 aa).

The signal sequence occupies residues 1–18; that stretch reads MPLRLLLLLLWLWGLSLQ. Residues 19–135 are Extracellular-facing; sequence RAETDSEGQT…DQKLILERLQ (117 aa). Intrachain disulfides connect cysteine 43–cysteine 67, cysteine 58–cysteine 100, and cysteine 81–cysteine 115. Asparagine 59, asparagine 69, and asparagine 74 each carry an N-linked (GlcNAc...) asparagine glycan. The helical transmembrane segment at 136 to 158 threads the bilayer; the sequence is VVYTVGYSLSLATLLLALLILSL. The Cytoplasmic portion of the chain corresponds to 159 to 166; the sequence is FRRLHCTR. Residues 167–186 form a helical membrane-spanning segment; the sequence is NYIHMNLFTSFMLRAGAILT. At 187–214 the chain is on the extracellular side; it reads RDQLLPPLGPYTGNQTPTLWNQALAACR. A helical membrane pass occupies residues 215–239; the sequence is TAQILTQYCVGANYTWLLVEGVYLH. Over 240 to 251 the chain is Cytoplasmic; the sequence is HLLVVVRRSEKG. The chain crosses the membrane as a helical span at residues 252-275; that stretch reads HFRCYLLLGWGAPALFVIPWVIVR. Topologically, residues 276-290 are extracellular; that stretch reads YLYENTQCWERNEVK. Residues 291–316 form a helical membrane-spanning segment; the sequence is AIWWIIRTPILITILINFLIFIRILG. At 317 to 338 the chain is on the cytoplasmic side; that stretch reads ILVSKLRTRQMRCPDYRLRLAR. A helical transmembrane segment spans residues 339 to 359; it reads STLTLMPLLGVHEVVFAPVTE. Over 360 to 374 the chain is Extracellular; sequence EQAEGSLRFAKLAFE. Residues 375 to 395 traverse the membrane as a helical segment; the sequence is IFLSSFQGFLVSVLYCFINKE. The Cytoplasmic portion of the chain corresponds to 396-455; the sequence is VQSEIRRLRLSLQEQCPRPHLGQAPRAVPLSSAPQEAAIRNALPSGMLHVPGDEVLESYC.

Belongs to the G-protein coupled receptor 2 family. In terms of assembly, may form homodimers and heterodimers with GLP1R. Post-translationally, N-glycosylation is required for cell surface expression and lengthens receptor half-life by preventing degradation in the ER. In terms of tissue distribution, present in the pancreas as well as the gut, adipose tissue, heart, pituitary, and inner layers of the adrenal cortex, whereas it is not found in kidney, spleen, or liver. It is also expressed in several brain regions, including the cerebral cortex, hippocampus, and olfactory bulb.

The protein localises to the cell membrane. Functionally, this is a receptor for GIP. The activity of this receptor is mediated by G proteins which activate adenylyl cyclase. In Rattus norvegicus (Rat), this protein is Gastric inhibitory polypeptide receptor (Gipr).